Here is a 692-residue protein sequence, read N- to C-terminus: Protein artemis (692 aa).

The residue at position 380 (Thr380) is a Phosphothreonine. At Ser385 the chain carries Phosphoserine. 2 disordered regions span residues 503–555 (RLEN…DSQS) and 640–660 (STNA…PEAE). The span at 507 to 520 (FPSSTEAGGSQSPK) shows a compositional bias: polar residues. The segment covering 530–543 (THISSQNSSQSTHI) has biased composition (low complexity). 2 stretches are compositionally biased toward polar residues: residues 544–555 (TEQGSQGWDSQS) and 640–650 (STNADSQSSSD). Ser645 carries the post-translational modification Phosphoserine; by ATM.

It belongs to the DNA repair metallo-beta-lactamase (DRMBL) family. Interacts with LIG4; the interaction is direct. Interacts with ATM. Interacts with BRCA1. Interacts with PRKDC. Interacts with TP53BP1. Also exhibits ATM- and phosphorylation-dependent interaction with the MRN complex, composed of MRE11, RAD50, and NBN. Post-translationally, phosphorylation on undefined residues by PRKDC may stimulate endonucleolytic activity on 5' and 3' hairpins and overhangs. PRKDC must remain present, even after phosphorylation, for efficient hairpin opening. Also phosphorylated by ATM in response to ionizing radiation (IR) and by ATR in response to ultraviolet (UV) radiation.

It is found in the nucleus. Required for V(D)J recombination, the process by which exons encoding the antigen-binding domains of immunoglobulins and T-cell receptor proteins are assembled from individual V, (D), and J gene segments. V(D)J recombination is initiated by the lymphoid specific RAG endonuclease complex, which generates site specific DNA double strand breaks (DSBs). These DSBs present two types of DNA end structures: hairpin sealed coding ends and phosphorylated blunt signal ends. These ends are independently repaired by the non homologous end joining (NHEJ) pathway to form coding and signal joints respectively. This protein exhibits single-strand specific 5'-3' exonuclease activity in isolation, and acquires endonucleolytic activity on 5' and 3' hairpins and overhangs when in a complex with PRKDC. The latter activity is required specifically for the resolution of closed hairpins prior to the formation of the coding joint. May also be required for the repair of complex DSBs induced by ionizing radiation, which require substantial end-processing prior to religation by NHEJ. This Pongo abelii (Sumatran orangutan) protein is Protein artemis (DCLRE1C).